A 240-amino-acid chain; its full sequence is Thiopurine S-methyltransferase (240 aa).

24-35 (WKEKWVTRHISF) contributes to the S-adenosyl-L-methionine binding site. Position 34 is a phosphoserine (serine 34). Phenylalanine 35 contacts substrate. An N6-acetyllysine modification is found at lysine 53. Residues leucine 64, glutamate 85, 129–130 (SI), and arginine 147 contribute to the S-adenosyl-L-methionine site.

Belongs to the class I-like SAM-binding methyltransferase superfamily. TPMT family. In terms of assembly, monomer.

It localises to the cytoplasm. The catalysed reaction is S-adenosyl-L-methionine + a thiopurine = S-adenosyl-L-homocysteine + a thiopurine S-methylether.. It catalyses the reaction mercaptopurine + S-adenosyl-L-methionine = 6-methylthiopurine + S-adenosyl-L-homocysteine + H(+). Catalyzes the S-methylation of thiopurine drugs such as 6-mercaptopurine (also called mercaptopurine, 6-MP or its brand name Purinethol) using S-adenosyl-L-methionine as the methyl donor. TPMT activity modulates the cytotoxic effects of thiopurine prodrugs. A natural substrate for this enzyme has yet to be identified. This is Thiopurine S-methyltransferase (Tpmt) from Mus musculus (Mouse).